Here is a 100-residue protein sequence, read N- to C-terminus: ATP-dependent Clp protease adapter protein ClpS (100 aa).

The protein belongs to the ClpS family. In terms of assembly, binds to the N-terminal domain of the chaperone ClpA.

Involved in the modulation of the specificity of the ClpAP-mediated ATP-dependent protein degradation. This is ATP-dependent Clp protease adapter protein ClpS from Neisseria meningitidis serogroup B (strain ATCC BAA-335 / MC58).